Reading from the N-terminus, the 101-residue chain is MMLEHVLVLSAYLFSIGIYGLITSRNMVRALMCLELILNAVNMNLVTFSDLFDSRQLKGDVFSIFVIAIAAAEAAIGPAIVSSIYRNRKSTRINQSNLLNK.

3 helical membrane passes run 2-22 (MLEH…YGLI), 32-52 (MCLE…SDLF), and 61-81 (VFSI…PAIV).

This sequence belongs to the complex I subunit 4L family. In terms of assembly, NDH is composed of at least 16 different subunits, 5 of which are encoded in the nucleus.

The protein resides in the plastid. It localises to the chloroplast thylakoid membrane. The enzyme catalyses a plastoquinone + NADH + (n+1) H(+)(in) = a plastoquinol + NAD(+) + n H(+)(out). The catalysed reaction is a plastoquinone + NADPH + (n+1) H(+)(in) = a plastoquinol + NADP(+) + n H(+)(out). NDH shuttles electrons from NAD(P)H:plastoquinone, via FMN and iron-sulfur (Fe-S) centers, to quinones in the photosynthetic chain and possibly in a chloroplast respiratory chain. The immediate electron acceptor for the enzyme in this species is believed to be plastoquinone. Couples the redox reaction to proton translocation, and thus conserves the redox energy in a proton gradient. This chain is NAD(P)H-quinone oxidoreductase subunit 4L, chloroplastic, found in Nuphar advena (Common spatterdock).